A 282-amino-acid chain; its full sequence is Cell division protein DivIB (282 aa).

Residues 1-59 (MLDDRSAIEHHKYSQRLTELERRSAAAQQRQQKKKPPKMHVGNKIRGIKIKRYVSNGER) lie on the Cytoplasmic side of the membrane. Positions 19 to 41 (ELERRSAAAQQRQQKKKPPKMHV) are disordered. Residues 31–41 (QQKKKPPKMHV) show a composition bias toward basic residues. The helical transmembrane segment at 60–80 (VLKLVVLFSAILLFMLYIISP) threads the bilayer. The Extracellular portion of the chain corresponds to 81 to 282 (LSKITTLHVT…YSYDYGSKDK (202 aa)). The 72-residue stretch at 82-153 (SKITTLHVTG…QSLQISVKEN (72 aa)) folds into the POTRA domain.

The protein belongs to the FtsQ/DivIB family. DivIB subfamily.

It is found in the cell membrane. In terms of biological role, cell division protein that may be involved in stabilizing or promoting the assembly of the division complex. In Limosilactobacillus reuteri (strain ATCC 55730 / SD2112) (Lactobacillus reuteri), this protein is Cell division protein DivIB.